The chain runs to 392 residues: Succinate--CoA ligase [ADP-forming] subunit beta (392 aa).

The 240-residue stretch at 9 to 248 (KDILRKFGVA…TNEEDPFEVE (240 aa)) folds into the ATP-grasp domain. Residues K50, 57–59 (GRG), E103, M106, and E111 each bind ATP. Mg(2+) contacts are provided by N203 and D217. Residues N268 and 325–327 (GIV) contribute to the substrate site.

It belongs to the succinate/malate CoA ligase beta subunit family. Heterotetramer of two alpha and two beta subunits. It depends on Mg(2+) as a cofactor.

It carries out the reaction succinate + ATP + CoA = succinyl-CoA + ADP + phosphate. It catalyses the reaction GTP + succinate + CoA = succinyl-CoA + GDP + phosphate. It functions in the pathway carbohydrate metabolism; tricarboxylic acid cycle; succinate from succinyl-CoA (ligase route): step 1/1. In terms of biological role, succinyl-CoA synthetase functions in the citric acid cycle (TCA), coupling the hydrolysis of succinyl-CoA to the synthesis of either ATP or GTP and thus represents the only step of substrate-level phosphorylation in the TCA. The beta subunit provides nucleotide specificity of the enzyme and binds the substrate succinate, while the binding sites for coenzyme A and phosphate are found in the alpha subunit. The polypeptide is Succinate--CoA ligase [ADP-forming] subunit beta (Pelodictyon phaeoclathratiforme (strain DSM 5477 / BU-1)).